A 938-amino-acid polypeptide reads, in one-letter code: Translation initiation factor IF-2 (938 aa).

The tract at residues 55-322 (KAEASAAPAA…RKSKRARRQE (268 aa)) is disordered. Low complexity-rich tracts occupy residues 57-68 (EASAAPAAPAEK) and 77-117 (KKAA…AAAP). Residues 118 to 136 (KPGPKPAPVAEQPAPPAEP) are compositionally biased toward pro residues. Low complexity-rich tracts occupy residues 141 to 153 (APEAPAASAAPAA), 180 to 198 (GMGRRPAPGAPAAPGAGDN), and 224 to 233 (MMPKSPSAFG). Residues 247–293 (PGRGGAPGRGGAPGRGGVGTGAPGRGGAPGGGFGPSGGGRPGGGRPG) show a composition bias toward gly residues. Over residues 310-319 (RRGRKSKRAR) the composition is skewed to basic residues. A tr-type G domain is found at 431–603 (ARPPVVTVMG…VVLTADASLD (173 aa)). The tract at residues 440–447 (GHVDHGKT) is G1. Residue 440-447 (GHVDHGKT) participates in GTP binding. Residues 465-469 (GITQH) are G2. Residues 490 to 493 (DTPG) are G3. Residues 490 to 494 (DTPGH) and 544 to 547 (NKID) each bind GTP. The G4 stretch occupies residues 544–547 (NKID). The G5 stretch occupies residues 580 to 582 (SAK).

It belongs to the TRAFAC class translation factor GTPase superfamily. Classic translation factor GTPase family. IF-2 subfamily.

It is found in the cytoplasm. One of the essential components for the initiation of protein synthesis. Protects formylmethionyl-tRNA from spontaneous hydrolysis and promotes its binding to the 30S ribosomal subunits. Also involved in the hydrolysis of GTP during the formation of the 70S ribosomal complex. The sequence is that of Translation initiation factor IF-2 from Nocardioides sp. (strain ATCC BAA-499 / JS614).